Reading from the N-terminus, the 165-residue chain is Nucleotide-binding protein P9301_05061 (165 aa).

This sequence belongs to the YajQ family.

Nucleotide-binding protein. The chain is Nucleotide-binding protein P9301_05061 from Prochlorococcus marinus (strain MIT 9301).